A 51-amino-acid polypeptide reads, in one-letter code: U-Asilidin(1)-Eru1a (51 aa).

The first 23 residues, 1-23 (MANYIDVLSFLAIICATVLATLA), serve as a signal peptide directing secretion. 3 disulfides stabilise this stretch: Cys26–Cys40, Cys33–Cys44, and Cys39–Cys49.

It belongs to the asilidin-1 family. In terms of tissue distribution, expressed by the venom gland. The most highly expressed peptides U-Asilidin1-Mar1a is around 3000 times higher expressed in the venom thoracic glands compared to its body tissues.

It localises to the secreted. In terms of biological role, induces neurotoxic effect on honeybees, including slow movements, disorientation and paralysis. Since it provokes similar symptoms than omega-atracotoxin, it is probable that it acts in the same way by inhibiting voltage-gated calcium channels. This is U-Asilidin(1)-Eru1a from Eutolmus rufibarbis (Golden-tabbed robberfly).